We begin with the raw amino-acid sequence, 235 residues long: 7-cyano-7-deazaguanine synthase (235 aa).

ATP is bound at residue 9-19 (FSGGQDSTTCL). The Zn(2+) site is built by Cys-197, Cys-212, Cys-215, and Cys-218.

The protein belongs to the QueC family. Requires Zn(2+) as cofactor.

The catalysed reaction is 7-carboxy-7-deazaguanine + NH4(+) + ATP = 7-cyano-7-deazaguanine + ADP + phosphate + H2O + H(+). It functions in the pathway purine metabolism; 7-cyano-7-deazaguanine biosynthesis. In terms of biological role, catalyzes the ATP-dependent conversion of 7-carboxy-7-deazaguanine (CDG) to 7-cyano-7-deazaguanine (preQ(0)). In Polaromonas sp. (strain JS666 / ATCC BAA-500), this protein is 7-cyano-7-deazaguanine synthase.